A 321-amino-acid chain; its full sequence is Ribonuclease Z (321 aa).

The Zn(2+) site is built by His62, His64, Asp66, His67, His139, Asp210, and His268. Asp66 (proton acceptor) is an active-site residue.

The protein belongs to the RNase Z family. In terms of assembly, homodimer. Requires Zn(2+) as cofactor.

The catalysed reaction is Endonucleolytic cleavage of RNA, removing extra 3' nucleotides from tRNA precursor, generating 3' termini of tRNAs. A 3'-hydroxy group is left at the tRNA terminus and a 5'-phosphoryl group is left at the trailer molecule.. In terms of biological role, zinc phosphodiesterase, which displays some tRNA 3'-processing endonuclease activity. Probably involved in tRNA maturation, by removing a 3'-trailer from precursor tRNA. The chain is Ribonuclease Z from Trichodesmium erythraeum (strain IMS101).